The sequence spans 266 residues: Indole-3-glycerol phosphate synthase (266 aa).

The protein belongs to the TrpC family.

It carries out the reaction 1-(2-carboxyphenylamino)-1-deoxy-D-ribulose 5-phosphate + H(+) = (1S,2R)-1-C-(indol-3-yl)glycerol 3-phosphate + CO2 + H2O. It functions in the pathway amino-acid biosynthesis; L-tryptophan biosynthesis; L-tryptophan from chorismate: step 4/5. The protein is Indole-3-glycerol phosphate synthase of Acidovorax sp. (strain JS42).